The following is a 157-amino-acid chain: Beta-defensin 125 (157 aa).

The signal sequence occupies residues 1–20; sequence MNILMLTFIICGLLTQVTKG. 3 disulfides stabilise this stretch: Cys27–Cys55, Cys35–Cys49, and Cys39–Cys56. The disordered stretch occupies residues 109–157; it reads GETMTPETNTPETTMPPPETTTPETTMPPSETATSETMPPPSQRALTHN. Composition is skewed to low complexity over residues 110–121 and 129–145; these read ETMTPETNTPET and TTPETTMPPSETATSET.

It belongs to the beta-defensin family.

The protein resides in the secreted. Its function is as follows. Has antibacterial activity. This chain is Beta-defensin 125 (DEFB125), found in Pan troglodytes (Chimpanzee).